Reading from the N-terminus, the 498-residue chain is UDP-N-acetylmuramoyl-L-alanyl-D-glutamate--2,6-diaminopimelate ligase (498 aa).

Ser-29 is a UDP-N-acetyl-alpha-D-muramoyl-L-alanyl-D-glutamate binding site. 120–126 is an ATP binding site; it reads GTDGKTS. UDP-N-acetyl-alpha-D-muramoyl-L-alanyl-D-glutamate is bound by residues 162–163, Ser-189, Gln-195, and Arg-197; that span reads TT. An N6-carboxylysine modification is found at Lys-229. Meso-2,6-diaminopimelate is bound by residues Arg-392, 416-419, Gly-466, and Glu-470; that span reads DNPR. Positions 416-419 match the Meso-diaminopimelate recognition motif motif; sequence DNPR.

The protein belongs to the MurCDEF family. MurE subfamily. Mg(2+) serves as cofactor. Post-translationally, carboxylation is probably crucial for Mg(2+) binding and, consequently, for the gamma-phosphate positioning of ATP.

The protein resides in the cytoplasm. It catalyses the reaction UDP-N-acetyl-alpha-D-muramoyl-L-alanyl-D-glutamate + meso-2,6-diaminopimelate + ATP = UDP-N-acetyl-alpha-D-muramoyl-L-alanyl-gamma-D-glutamyl-meso-2,6-diaminopimelate + ADP + phosphate + H(+). Its pathway is cell wall biogenesis; peptidoglycan biosynthesis. Functionally, catalyzes the addition of meso-diaminopimelic acid to the nucleotide precursor UDP-N-acetylmuramoyl-L-alanyl-D-glutamate (UMAG) in the biosynthesis of bacterial cell-wall peptidoglycan. The polypeptide is UDP-N-acetylmuramoyl-L-alanyl-D-glutamate--2,6-diaminopimelate ligase (Alkalilimnicola ehrlichii (strain ATCC BAA-1101 / DSM 17681 / MLHE-1)).